The sequence spans 398 residues: ATP-dependent RNA helicase eIF4A (398 aa).

The Q motif motif lies at aspartate 25–glutamine 53. The 171-residue stretch at isoleucine 56–isoleucine 226 folds into the Helicase ATP-binding domain. Alanine 69–threonine 76 lines the ATP pocket. A DEAD box motif is present at residues aspartate 174–aspartate 177. Positions glycine 237–isoleucine 398 constitute a Helicase C-terminal domain.

It belongs to the DEAD box helicase family. eIF4A subfamily. Component of the eIF4F complex, which composition varies with external and internal environmental conditions. It is composed of at least eIF4A, eIF4E and eIF4G.

It is found in the cytoplasm. The catalysed reaction is ATP + H2O = ADP + phosphate + H(+). In terms of biological role, ATP-dependent RNA helicase which is a subunit of the eIF4F complex involved in cap recognition and is required for mRNA binding to ribosome. In the current model of translation initiation, eIF4A unwinds RNA secondary structures in the 5'-UTR of mRNAs which is necessary to allow efficient binding of the small ribosomal subunit, and subsequent scanning for the initiator codon. This chain is ATP-dependent RNA helicase eIF4A (tif1), found in Sclerotinia sclerotiorum (strain ATCC 18683 / 1980 / Ss-1) (White mold).